A 344-amino-acid polypeptide reads, in one-letter code: uncharacterized protein (344 aa).

5 consecutive transmembrane segments (helical) span residues F53–W73, W84–I104, I153–L173, F189–L209, and I275–F295.

The protein belongs to the steroid 5-alpha reductase family.

It is found in the endoplasmic reticulum membrane. This is an uncharacterized protein from Schizosaccharomyces pombe (strain 972 / ATCC 24843) (Fission yeast).